The following is a 525-amino-acid chain: Ribonuclease Y (525 aa).

A helical transmembrane segment spans residues 3–23; sequence IFFISLVLIVLASVVFFVGGF. Positions 215–300 constitute a KH domain; the sequence is ALSVVHIQSD…KAYEDAKKEI (86 aa). The HD domain occupies 341–433; the sequence is LLQHSREVAM…VDAANVISLS (93 aa).

Belongs to the RNase Y family.

It is found in the cell membrane. Functionally, endoribonuclease that initiates mRNA decay. This is Ribonuclease Y from Chlorobium phaeobacteroides (strain DSM 266 / SMG 266 / 2430).